Here is a 478-residue protein sequence, read N- to C-terminus: Odorant receptor coreceptor (478 aa).

The Cytoplasmic segment spans residues 1 to 43 (MNVQPTKYHGLVLDLMPNIRLMQGFGHFLFRYVNGPVLIRKLY). Residues 44 to 64 (SWWNLIMILLQYFAIMGNLVM) traverse the membrane as a helical segment. Residues 65-73 (NTGDVNELT) are Extracellular-facing. A helical transmembrane segment spans residues 74–94 (ANTITTLFFTHSVTKFIYVAV). Residues 95–133 (NSEHFYRTLGIWNQPNSHSLFAESDARYHSIALAKMRKL) are Cytoplasmic-facing. The chain crosses the membrane as a helical span at residues 134–154 (LVMVMVTTVLSVVAWITITFF). The Extracellular segment spans residues 155–187 (GDSVKNVFDKETNETYTVEIPRLPIKAWYPWDA). N-linked (GlcNAc...) asparagine glycosylation is present at Asn-167. A helical transmembrane segment spans residues 188–208 (MSGVPYFFSFIYQAYFLLFSM). Over 209–343 (CQANLADVMF…VERHKHVVRL (135 aa)) the chain is Cytoplasmic. A helical membrane pass occupies residues 344–364 (VSAIGETYGAALLLHMLTSTI). At 365 to 382 (KLTLLAYQATKIDALNVY) the chain is on the extracellular side. The chain crosses the membrane as a helical span at residues 383-403 (GLTVIGYLVYALAQVFLFCIF). Residues 404–454 (GNRLIEESSSVMEAAYSCHWYDGSEEAKTFVQIVCQQCQKAMTISGAKFFT) are Cytoplasmic-facing. A helical transmembrane segment spans residues 455–475 (VSLDLFASVLGAVVTYFMVLV). Over 476 to 478 (QLK) the chain is Extracellular.

Belongs to the insect chemoreceptor superfamily. Heteromeric odorant receptor channel (TC 1.A.69) family. Orco subfamily. In terms of assembly, heterodimer with conventional odorant receptors (ORs). Complexes exist early in the endomembrane system in olfactory sensory neurons (OSNs), coupling these complexes to the conserved ciliary trafficking pathway. Found specifically within most antennal and maxillary palp sensilla, as well as in a subset of proboscis sensilla.

It is found in the cell membrane. Odorant coreceptor which complexes with conventional odorant receptors (ORs) to form odorant-sensing units, providing sensitive and prolonged odorant signaling and calcium permeability. Orco is a universal and integral part of the functional odorant receptor, involved in the dendritic localization of other olfactory receptors. Plays a key role in preferred attraction of females for humans over non-human hosts for blood feeding. Human attraction plays a crucial role in the transmission of dengue and yellow fever by the mosquito. Also required for the response to the insect repellent IR3535; or to N,N-Diethyl-meta-toluamide (DEET), the most widely used insect repellent worldwide. The polypeptide is Odorant receptor coreceptor (SGPRor7) (Aedes aegypti (Yellowfever mosquito)).